We begin with the raw amino-acid sequence, 758 residues long: MRKQGVSSKRLQSSGRSQSKGRRGASLAREPEVEEEMEKSALGGGKLPRGSWRSSPGRIQSLKERKGLELEVVAKTFLLGPFQFVRNSLAQLREKVQELQARRFSSRTTLGIAVFVAILHWLHLVTLFENDRHFSHLSSLEREMTFRTEMGLYYSYFKTIIEAPSFLEGLWMIMNDRLTEYPLIINAIKRFHLYPEVIIASWYCTFMGIMNLFGLETKTCWNVTRIEPLNEVQSCEGLGDPACFYVGVIFILNGLMMGLFFMYGAYLSGTQLGGLITVLCFFFNHGEATRVMWTPPLRESFSYPFLVLQMCILTLILRTSSNDRRPFIALCLSNVAFMLPWQFAQFILFTQIASLFPMYVVGYIEPSKFQKIIYMNMISVTLSFILMFGNSMYLSSYYSSSLLMTWAIILKRNEIQKLGVSKLNFWLIQGSAWWCGTIILKFLTSKILGVSDHIRLSDLIAARILRYTDFDTLIYTCAPEFDFMEKATPLRYTKTLLLPVVMVITCFIFKKTVRDISYVLATNIYLRKQLLEHSELAFHTLQLLVFTALAILIMRLKMFLTPHMCVMASLICSRQLFGWLFRRVRFEKVIFGILTVMSIQGYANLRNQWSIIGEFNNLPQEELLQWIKYSTTSDAVFAGAMPTMASIKLSTLHPIVNHPHYEDADLRARTKIVYSTYSRKSAKEVRDKLLELHVNYYVLEEAWCVVRTKPGCSMLEIWDVEDPSNAANPPLCSVLLEDARPYFTTVFQNSVYRVLKVN.

The tract at residues 1 to 58 (MRKQGVSSKRLQSSGRSQSKGRRGASLAREPEVEEEMEKSALGGGKLPRGSWRSSPGR) is disordered. Residues 1-107 (MRKQGVSSKR…ELQARRFSSR (107 aa)) lie on the Nuclear side of the membrane. Positions 7–18 (SSKRLQSSGRSQ) are enriched in low complexity. The chain crosses the membrane as a helical span at residues 108 to 128 (TTLGIAVFVAILHWLHLVTLF). Residues 129–194 (ENDRHFSHLS…INAIKRFHLY (66 aa)) are Perinuclear space-facing. Residues 195-215 (PEVIIASWYCTFMGIMNLFGL) form a helical membrane-spanning segment. The Nuclear segment spans residues 216–241 (ETKTCWNVTRIEPLNEVQSCEGLGDP). The next 2 helical transmembrane spans lie at 242-262 (ACFYVGVIFILNGLMMGLFFM) and 263-283 (YGAYLSGTQLGGLITVLCFFF). At 284-296 (NHGEATRVMWTPP) the chain is on the nuclear side. The helical transmembrane segment at 297 to 317 (LRESFSYPFLVLQMCILTLIL) threads the bilayer. Topologically, residues 318–343 (RTSSNDRRPFIALCLSNVAFMLPWQF) are perinuclear space. A helical membrane pass occupies residues 344-364 (AQFILFTQIASLFPMYVVGYI). Residues 365-371 (EPSKFQK) are Nuclear-facing. The chain crosses the membrane as a helical span at residues 372-392 (IIYMNMISVTLSFILMFGNSM). Topologically, residues 393-422 (YLSSYYSSSLLMTWAIILKRNEIQKLGVSK) are perinuclear space. The chain crosses the membrane as a helical span at residues 423 to 443 (LNFWLIQGSAWWCGTIILKFL). The Nuclear portion of the chain corresponds to 444–488 (TSKILGVSDHIRLSDLIAARILRYTDFDTLIYTCAPEFDFMEKAT). Residues 489–509 (PLRYTKTLLLPVVMVITCFIF) form a helical membrane-spanning segment. Residues 510–533 (KKTVRDISYVLATNIYLRKQLLEH) lie on the Perinuclear space side of the membrane. Residues 534 to 554 (SELAFHTLQLLVFTALAILIM) form a helical membrane-spanning segment. The Nuclear segment spans residues 555-758 (RLKMFLTPHM…NSVYRVLKVN (204 aa)).

It belongs to the dpy-19 family. In terms of assembly, interacts with FAM209. Widely expressed with high expression in testis. Not detectable in ejaculated sperm (at protein level).

Its subcellular location is the nucleus inner membrane. Probable C-mannosyltransferase that mediates C-mannosylation of tryptophan residues on target proteins. In terms of biological role, required during spermatogenesis for sperm head elongation and acrosome formation. Also plays a role in acrosome attachment to the nuclear envelope. This is Probable C-mannosyltransferase DPY19L2 from Homo sapiens (Human).